The sequence spans 508 residues: DEAD-box ATP-dependent RNA helicase 8 (508 aa).

Residues 1 to 123 (MDPRARYPPG…LKLPPQDTRY (123 aa)) form a disordered region. Low complexity predominate over residues 18–53 (NPNYYNRGPPLQQQHNHHQQQQTSAPHHQQYVQRQP). A compositionally biased stretch (basic residues) spans 54–64 (QQHHHHNHHQQ). Positions 134–162 (NEFEDYFLKRELLMGIYEKGFERPSPIQE) match the Q motif motif. Residues 165 to 335 (IPIALTGSDI…DKYLPKPYVI (171 aa)) enclose the Helicase ATP-binding domain. ATP is bound at residue 178-185 (AKNGTGKT). Residues 283–286 (DEAD) carry the DEAD box motif. A Helicase C-terminal domain is found at 345–505 (GITQFYAFVE…PIPPQIDQAI (161 aa)).

It belongs to the DEAD box helicase family. DDX6/DHH1 subfamily.

It is found in the cytoplasm. It localises to the P-body. It catalyses the reaction ATP + H2O = ADP + phosphate + H(+). Functionally, ATP-dependent RNA helicase involved in mRNA turnover, and more specifically in mRNA decapping. In Oryza sativa subsp. japonica (Rice), this protein is DEAD-box ATP-dependent RNA helicase 8.